Here is a 729-residue protein sequence, read N- to C-terminus: Transketolase (729 aa).

Position 97 (His97) interacts with substrate. Residues His138 and Gly186 to Leu188 contribute to the thiamine diphosphate site. Mg(2+) is bound at residue Asp227. Thiamine diphosphate contacts are provided by Gly228 and Asn257. The Mg(2+) site is built by Asn257 and Ile259. Positions 332, 423, and 450 each coordinate substrate. Residue His332 participates in thiamine diphosphate binding. The Proton donor role is filled by Glu477. Position 503 (Phe503) interacts with thiamine diphosphate. Substrate-binding residues include His527, Asp535, and Arg586.

The protein belongs to the transketolase family. As to quaternary structure, homodimer. It depends on Mg(2+) as a cofactor. Ca(2+) is required as a cofactor. Requires Mn(2+) as cofactor. Co(2+) serves as cofactor. The cofactor is thiamine diphosphate.

The catalysed reaction is D-sedoheptulose 7-phosphate + D-glyceraldehyde 3-phosphate = aldehydo-D-ribose 5-phosphate + D-xylulose 5-phosphate. Catalyzes the transfer of a two-carbon ketol group from a ketose donor to an aldose acceptor, via a covalent intermediate with the cofactor thiamine pyrophosphate. In Streptococcus pyogenes serotype M6 (strain ATCC BAA-946 / MGAS10394), this protein is Transketolase.